The primary structure comprises 1047 residues: uncharacterized protein (1047 aa).

N6-acetyllysine is present on lysine 17. Disordered regions lie at residues 172–208 (PPCSLAPAPSKGQTLDGTFLRGVPAEGSSKDSSGSFS) and 236–283 (RNSK…PQAL). At serine 208 the chain carries Phosphoserine. Positions 237–254 (NSKQAMSEGPSSPWTQLA) are enriched in polar residues. Over residues 268-283 (HYPPPHHPPPHPPQAL) the composition is skewed to pro residues. A phosphoserine mark is found at serine 299 and serine 391. Residue threonine 397 is modified to Phosphothreonine. Disordered stretches follow at residues 448-469 (EKLQPRLSEHSGPPIVIRDSPV), 482-504 (ECQSLPQKEGARPPSSPPMPVID), 519-567 (PAPE…LRGS), 668-690 (PSTPTSAPAPTQPAPTPTSGPIG), 714-763 (VAVA…GDSL), 931-1004 (EAGA…TLKA), and 1021-1047 (PTWGHKSSRPDQPSPCPQLLDSQSHHL). 3 positions are modified to phosphoserine: serine 455, serine 496, and serine 497. 2 stretches are compositionally biased toward low complexity: residues 729-741 (PARAQAPASARDP) and 751-762 (PAPASTSAPGDS). Phosphoserine is present on residues serine 936, serine 956, serine 988, and serine 996. Residues 978-996 (AAAGEESCGASPTPATSAS) show a composition bias toward low complexity.

This is an uncharacterized protein from Homo sapiens (Human).